Consider the following 293-residue polypeptide: 4-hydroxy-tetrahydrodipicolinate synthase (293 aa).

T50 is a pyruvate binding site. Y138 serves as the catalytic Proton donor/acceptor. Residue K166 is the Schiff-base intermediate with substrate of the active site. V206 is a pyruvate binding site.

The protein belongs to the DapA family. In terms of assembly, homotetramer; dimer of dimers.

It is found in the cytoplasm. It catalyses the reaction L-aspartate 4-semialdehyde + pyruvate = (2S,4S)-4-hydroxy-2,3,4,5-tetrahydrodipicolinate + H2O + H(+). It participates in amino-acid biosynthesis; L-lysine biosynthesis via DAP pathway; (S)-tetrahydrodipicolinate from L-aspartate: step 3/4. Catalyzes the condensation of (S)-aspartate-beta-semialdehyde [(S)-ASA] and pyruvate to 4-hydroxy-tetrahydrodipicolinate (HTPA). The polypeptide is 4-hydroxy-tetrahydrodipicolinate synthase (Cutibacterium acnes (strain DSM 16379 / KPA171202) (Propionibacterium acnes)).